Reading from the N-terminus, the 325-residue chain is MHICSLIPILFPKLLTCGLALYSAVVLWLKVSVIGSFIQGTVLLTLVPLILYAYFSTIAVGPGSPLDFEELRIRDLNDVETGMEFPPDFLAAKTVTLDSTGRHRYCVKCKVWKPDRCHHCSACDKCYLRRDHHCVWFPGCIGYNNHKFFLHFLLYASVYAFWICIITTWDLVVWFRAHSYERELLNVHLVCLWALSAAATVALTAFCAFNIYLVCKNETTGEYQRRSTLNSDLEMYADCTNGPRTVIENPFDLGSRRRNWAAVMGDTWKEWLLPIRTTASQKARHSFDESGLYFKIDEQAHAKLAESMALQARLITRFNSKRAVQ.

Residues 1–8 (MHICSLIP) are Cytoplasmic-facing. Residues 9 to 29 (ILFPKLLTCGLALYSAVVLWL) form a helical membrane-spanning segment. Position 30 (K30) is a topological domain, lumenal. A helical membrane pass occupies residues 31–51 (VSVIGSFIQGTVLLTLVPLIL). Over 52 to 147 (YAYFSTIAVG…PGCIGYNNHK (96 aa)) the chain is Cytoplasmic. The DHHC domain occupies 104–154 (RYCVKCKVWKPDRCHHCSACDKCYLRRDHHCVWFPGCIGYNNHKFFLHFLL). The chain crosses the membrane as a helical span at residues 148–168 (FFLHFLLYASVYAFWICIITT). Topologically, residues 169 to 188 (WDLVVWFRAHSYERELLNVH) are lumenal. The chain crosses the membrane as a helical span at residues 189 to 209 (LVCLWALSAAATVALTAFCAF). The Cytoplasmic segment spans residues 210-325 (NIYLVCKNET…TRFNSKRAVQ (116 aa)).

The protein belongs to the DHHC palmitoyltransferase family. PFA3 subfamily. Autopalmitoylated.

The protein resides in the vacuole membrane. It carries out the reaction L-cysteinyl-[protein] + hexadecanoyl-CoA = S-hexadecanoyl-L-cysteinyl-[protein] + CoA. Functionally, palmitoyltransferase specific for VAC8. Palmitoylates VAC8 at one or more of its N-terminal cysteine residues, which is required for its proper membrane localization. This chain is Palmitoyltransferase PFA3 (PFA3), found in Eremothecium gossypii (strain ATCC 10895 / CBS 109.51 / FGSC 9923 / NRRL Y-1056) (Yeast).